The sequence spans 154 residues: Prefoldin subunit alpha (154 aa).

This sequence belongs to the prefoldin alpha subunit family. In terms of assembly, heterohexamer of two alpha and four beta subunits.

The protein localises to the cytoplasm. In terms of biological role, molecular chaperone capable of stabilizing a range of proteins. Seems to fulfill an ATP-independent, HSP70-like function in archaeal de novo protein folding. The sequence is that of Prefoldin subunit alpha from Hyperthermus butylicus (strain DSM 5456 / JCM 9403 / PLM1-5).